Reading from the N-terminus, the 89-residue chain is uncharacterized protein (89 aa).

2 helical membrane passes run 11–31 and 63–83; these read IFGA…PIAL and AAIS…TVVF.

Its subcellular location is the cell membrane. This is an uncharacterized protein from Methanocaldococcus jannaschii (strain ATCC 43067 / DSM 2661 / JAL-1 / JCM 10045 / NBRC 100440) (Methanococcus jannaschii).